Here is a 212-residue protein sequence, read N- to C-terminus: 3-isopropylmalate dehydratase small subunit (212 aa).

This sequence belongs to the LeuD family. LeuD type 1 subfamily. As to quaternary structure, heterodimer of LeuC and LeuD.

It carries out the reaction (2R,3S)-3-isopropylmalate = (2S)-2-isopropylmalate. It participates in amino-acid biosynthesis; L-leucine biosynthesis; L-leucine from 3-methyl-2-oxobutanoate: step 2/4. Catalyzes the isomerization between 2-isopropylmalate and 3-isopropylmalate, via the formation of 2-isopropylmaleate. This chain is 3-isopropylmalate dehydratase small subunit, found in Methylococcus capsulatus (strain ATCC 33009 / NCIMB 11132 / Bath).